The following is a 592-amino-acid chain: Bifunctional enzyme BirA/CoaX (592 aa).

The biotin--protein ligase stretch occupies residues 1-329; sequence MTVLKPSHWR…ISLRPDNRSV (329 aa). Positions 83–259 constitute a BPL/LPL catalytic domain; that stretch reads QTALKHECAS…ELGAVLEQYA (177 aa). Residues 336–592 are type III pantothenate kinase; it reads DSERFLLLEG…AAEGGESEHA (257 aa). 344 to 351 contributes to the ATP binding site; that stretch reads EGGNSRLK. Substrate-binding positions include Tyr426 and 433–436; that span reads GSDR. Residue Asp435 is the Proton acceptor of the active site. Position 458 (Thr458) interacts with ATP. Thr508 serves as a coordination point for substrate.

This sequence in the N-terminal section; belongs to the biotin--protein ligase family. In the C-terminal section; belongs to the type III pantothenate kinase family. NH4(+) serves as cofactor. The cofactor is K(+).

Its subcellular location is the cytoplasm. It catalyses the reaction biotin + L-lysyl-[protein] + ATP = N(6)-biotinyl-L-lysyl-[protein] + AMP + diphosphate + H(+). The catalysed reaction is (R)-pantothenate + ATP = (R)-4'-phosphopantothenate + ADP + H(+). It functions in the pathway cofactor biosynthesis; coenzyme A biosynthesis; CoA from (R)-pantothenate: step 1/5. Functionally, activates biotin to form biotinyl-5'-adenylate and transfers the biotin moiety to biotin-accepting proteins. In terms of biological role, catalyzes the phosphorylation of pantothenate (Pan), the first step in CoA biosynthesis. The polypeptide is Bifunctional enzyme BirA/CoaX (birA/coaX) (Neisseria gonorrhoeae (strain ATCC 700825 / FA 1090)).